The primary structure comprises 92 residues: Acylphosphatase (92 aa).

Positions 5–92 (RAHVFISGRV…GKEGIFTIVW (88 aa)) constitute an Acylphosphatase-like domain. Active-site residues include arginine 20 and asparagine 38.

Belongs to the acylphosphatase family.

The enzyme catalyses an acyl phosphate + H2O = a carboxylate + phosphate + H(+). The polypeptide is Acylphosphatase (acyP) (Chloroflexus aurantiacus (strain ATCC 29366 / DSM 635 / J-10-fl)).